The primary structure comprises 361 residues: Probable U3 small nucleolar RNA-associated protein 11 (361 aa).

Disordered regions lie at residues 1-52, 200-235, 262-295, and 311-361; these read MTKG…KKRK, LMSG…TPET, KRES…TRLL, and RHVR…RRAR. Over residues 17–33 the composition is skewed to basic residues; sequence HLKRKTHLERSQPKSRQ. 2 stretches are compositionally biased toward basic and acidic residues: residues 37 to 46 and 217 to 228; these read QLEKHKDHVL and RREVQEKMRRSG. Over residues 278–287 the composition is skewed to acidic residues; that stretch reads DDGEQEEAAA. Residues 342-352 are compositionally biased toward basic and acidic residues; it reads RQMEQRRESRF.

This sequence belongs to the UTP11 family. As to quaternary structure, component of the ribosomal small subunit (SSU) processome.

It localises to the nucleus. The protein localises to the nucleolus. In terms of biological role, involved in nucleolar processing of pre-18S ribosomal RNA. In Leishmania major, this protein is Probable U3 small nucleolar RNA-associated protein 11.